Reading from the N-terminus, the 266-residue chain is Non-structural maintenance of chromosomes element 1 homolog (266 aa).

The interval 1–102 (MQGSTRRAGA…SVSKMATDFA (102 aa)) is interaction with NSMCE3. The segment at 191–232 (CNICHGLLIQGQSCETCGIRMHLPCVAKYFQSIPEPHCPHCN) adopts an RING-type; atypical zinc-finger fold. The tract at residues 246–266 (EKEREAGISKSSRKSLRTRQH) is disordered. Residues 256–266 (SSRKSLRTRQH) are compositionally biased toward basic residues.

This sequence belongs to the NSE1 family. Component of the SMC5-SMC6 complex which consists at least of SMC5, SMC6, NSMCE2, NSMCE1, NSMCE4A or EID3 and NSMCE3. NSMCE1, NSMCE4A or EID3 and NSMCE3 probably form a subcomplex that bridges the head domains of the SMC5-SMC6 heterodimer. Interacts with NSMCE3. In terms of processing, ubiquitinated.

It localises to the nucleus. The protein localises to the chromosome. Its subcellular location is the telomere. It carries out the reaction S-ubiquitinyl-[E2 ubiquitin-conjugating enzyme]-L-cysteine + [acceptor protein]-L-lysine = [E2 ubiquitin-conjugating enzyme]-L-cysteine + N(6)-ubiquitinyl-[acceptor protein]-L-lysine.. RING-type zinc finger-containing E3 ubiquitin ligase that assembles with melanoma antigen protein (MAGE) to catalyze the direct transfer of ubiquitin from E2 ubiquitin-conjugating enzyme to a specific substrate. Within MAGE-RING ubiquitin ligase complex, MAGE stimulates and specifies ubiquitin ligase activity likely through recruitment and/or stabilization of the E2 ubiquitin-conjugating enzyme at the E3:substrate complex. Involved in maintenance of genome integrity, DNA damage response and DNA repair. NSMCE3/MAGEG1 and NSMCE1 ubiquitin ligase are components of SMC5-SMC6 complex and may positively regulate homologous recombination-mediated DNA repair. This is Non-structural maintenance of chromosomes element 1 homolog (Nsmce1) from Mus musculus (Mouse).